Reading from the N-terminus, the 349-residue chain is GMP reductase (349 aa).

108 to 131 (LDFFKIKKIFSLSSELKYICIDVA) provides a ligand contact to NADP(+). Gly181 and Gly183 together coordinate K(+). The active-site Thioimidate intermediate is the Cys186. 216-239 (IISDGGCTVSGDIAKAFGGGADFV) lines the NADP(+) pocket.

The protein belongs to the IMPDH/GMPR family. GuaC type 1 subfamily. In terms of assembly, homotetramer.

It catalyses the reaction IMP + NH4(+) + NADP(+) = GMP + NADPH + 2 H(+). Its function is as follows. Catalyzes the irreversible NADPH-dependent deamination of GMP to IMP. It functions in the conversion of nucleobase, nucleoside and nucleotide derivatives of G to A nucleotides, and in maintaining the intracellular balance of A and G nucleotides. In Buchnera aphidicola subsp. Schizaphis graminum (strain Sg), this protein is GMP reductase.